The primary structure comprises 276 residues: MIVRSIWKGAISFGLVHIPIKLFAATEEKDVRFHLLHKECHNPIQYQKRCPYCDREVTPEEIVKGFEYDKGRYVIITQEELEGLAPEGSRSIDIQSFVALKEIDPIFFVKTYYLSPDQHGQKAYALLRNALRETDRLALARVILRTKEALVALRVYGKGLAMHTMLYPEEIRSMEPLGDLGESIEVSAKEQTMAVQLIESLTEPFDPVKWQSEQRERIRHFINAKVQGQAIVEAPQTPTVGKVIDLMEALKASIQQVKTQQKKEAAPKKERRRKTS.

The region spanning 11–177 (ISFGLVHIPI…PEEIRSMEPL (167 aa)) is the Ku domain. The interval 256-276 (QVKTQQKKEAAPKKERRRKTS) is disordered.

The protein belongs to the prokaryotic Ku family. As to quaternary structure, homodimer. Interacts with LigD.

Its function is as follows. With LigD forms a non-homologous end joining (NHEJ) DNA repair enzyme, which repairs dsDNA breaks with reduced fidelity. Binds linear dsDNA with 5'- and 3'- overhangs but not closed circular dsDNA nor ssDNA. Recruits and stimulates the ligase activity of LigD. The chain is Non-homologous end joining protein Ku from Heliobacterium modesticaldum (strain ATCC 51547 / Ice1).